A 694-amino-acid chain; its full sequence is Phosphatase and actin regulator 4-A (694 aa).

Basic and acidic residues-rich tracts occupy residues 1 to 13 and 46 to 72; these read MEDR…DHSE and SSDS…ELIK. Disordered regions lie at residues 1–29, 42–169, 192–403, 426–445, and 450–572; these read MEDR…KSKF, RKRK…QPLP, VNEV…HIRI, LFMQ…RSLP, and LLKV…QIRQ. The stretch at 55 to 80 is one RPEL 1 repeat; the sequence is EVLERKISTRKPREELIKRGLLVEVP. The span at 240 to 267 shows a compositional bias: polar residues; sequence SISTSVTQESAVAGQKSDSSNRLQSSAP. The segment covering 300-317 has biased composition (low complexity); it reads AELSLALAGSPLSPAGSR. 2 stretches are compositionally biased toward pro residues: residues 318-327 and 372-381; these read PSPPLPPKRA and SNPPVPPLTL. Acidic residues-rich tracts occupy residues 455-467, 499-511, and 519-529; these read DDED…DESL, QEEE…DTDS, and DDEEEEEEEET. RPEL repeat units follow at residues 576–601 and 613–638; these read TQLN…QKNE and RRLT…RFNE.

This sequence belongs to the phosphatase and actin regulator family. As to quaternary structure, binds ppp1ca and actin.

The protein localises to the cytoplasm. It localises to the cell projection. It is found in the lamellipodium. In terms of biological role, regulator of protein phosphatase 1 (PP1) required for neural tube and optic fissure closure, and enteric neural crest cell (ENCCs) migration during development. Acts as an activator of PP1. During neural tube closure, localizes to the ventral neural tube and activates PP1, leading to down-regulate cell proliferation within cranial neural tissue and the neural retina. Also acts as a regulator of migration of enteric neural crest cells (ENCCs) by activating PP1, leading to repression of the integrin signaling through the rho/rock pathway. The sequence is that of Phosphatase and actin regulator 4-A (phactr4-a) from Xenopus laevis (African clawed frog).